The sequence spans 339 residues: Ketol-acid reductoisomerase (NADP(+)) (339 aa).

The region spanning 1–182 (MRVYYDRDAD…GGGRAGIIET (182 aa)) is the KARI N-terminal Rossmann domain. Residues 24–27 (YGSQ), arginine 48, serine 51, serine 53, and 83–86 (DELQ) contribute to the NADP(+) site. Histidine 108 is an active-site residue. Glycine 134 is an NADP(+) binding site. The 146-residue stretch at 183-328 (TFKEECETDL…AKLRDMMPWI (146 aa)) folds into the KARI C-terminal knotted domain. Mg(2+) contacts are provided by aspartate 191, glutamate 195, glutamate 227, and glutamate 231. Substrate is bound at residue serine 252.

Belongs to the ketol-acid reductoisomerase family. Mg(2+) is required as a cofactor.

The catalysed reaction is (2R)-2,3-dihydroxy-3-methylbutanoate + NADP(+) = (2S)-2-acetolactate + NADPH + H(+). It carries out the reaction (2R,3R)-2,3-dihydroxy-3-methylpentanoate + NADP(+) = (S)-2-ethyl-2-hydroxy-3-oxobutanoate + NADPH + H(+). It participates in amino-acid biosynthesis; L-isoleucine biosynthesis; L-isoleucine from 2-oxobutanoate: step 2/4. Its pathway is amino-acid biosynthesis; L-valine biosynthesis; L-valine from pyruvate: step 2/4. In terms of biological role, involved in the biosynthesis of branched-chain amino acids (BCAA). Catalyzes an alkyl-migration followed by a ketol-acid reduction of (S)-2-acetolactate (S2AL) to yield (R)-2,3-dihydroxy-isovalerate. In the isomerase reaction, S2AL is rearranged via a Mg-dependent methyl migration to produce 3-hydroxy-3-methyl-2-ketobutyrate (HMKB). In the reductase reaction, this 2-ketoacid undergoes a metal-dependent reduction by NADPH to yield (R)-2,3-dihydroxy-isovalerate. In Bradyrhizobium diazoefficiens (strain JCM 10833 / BCRC 13528 / IAM 13628 / NBRC 14792 / USDA 110), this protein is Ketol-acid reductoisomerase (NADP(+)).